The chain runs to 396 residues: Pre-mRNA-splicing regulator WTAP (396 aa).

Residue methionine 1 is modified to N-acetylmethionine. Position 14 is a phosphoserine (serine 14). Composition is skewed to low complexity over residues 240-257 (QQQQ…TTSS) and 278-291 (SNGS…SGSG). Residues 240-396 (QQQQSQASAP…SSVNVQGAVL (157 aa)) form a disordered region. A phosphoserine mark is found at serine 297, serine 305, serine 306, and serine 341. The span at 305-316 (SSSGNGNKASNS) shows a compositional bias: low complexity. Over residues 340–351 (DSPTGSENSLTH) the composition is skewed to polar residues. Position 350 is a phosphothreonine (threonine 350). Residues 352–368 (HSNDTDSSHDPQEEKAV) are compositionally biased toward basic and acidic residues. The segment covering 380–396 (HVQNGLDSSVNVQGAVL) has biased composition (polar residues). Position 388 is a phosphoserine (serine 388).

Belongs to the fl(2)d family. In terms of assembly, component of the WMM complex, a N6-methyltransferase complex composed of a catalytic subcomplex, named MAC, and of an associated subcomplex, named MACOM. The MAC subcomplex is composed of METTL3 and METTL14. The MACOM subcomplex is composed of WTAP, ZC3H13, CBLL1/HAKAI, VIRMA, and, in some cases of RBM15 (RBM15 or RBM15B). Interacts with WT1. Also a component of a MACOM-like complex, named WTAP complex, composed of WTAP, ZC3H13, CBLL1, VIRMA, RBM15, BCLAF1 and THRAP3. Interacts with CPNE4 (via VWFA domain).

It localises to the nucleus speckle. The protein localises to the nucleus. It is found in the nucleoplasm. Its subcellular location is the cytoplasm. Functionally, associated component of the WMM complex, a complex that mediates N6-methyladenosine (m6A) methylation of RNAs, a modification that plays a role in the efficiency of mRNA splicing and RNA processing. Acts as a key regulator of m6A methylation by promoting m6A methylation of mRNAs at the 3'-UTR. Required for accumulation of METTL3 and METTL14 to nuclear speckle. Acts as a mRNA splicing regulator. Regulates G2/M cell-cycle transition by binding to the 3' UTR of CCNA2, which enhances its stability. Impairs WT1 DNA-binding ability and inhibits expression of WT1 target genes. This Mus musculus (Mouse) protein is Pre-mRNA-splicing regulator WTAP.